Here is a 455-residue protein sequence, read N- to C-terminus: UDP-glycosyltransferase 87A2 (455 aa).

N-acetylmethionine is present on methionine 1. Residues serine 278, 327 to 329 (CDQ), 344 to 352 (HCGFNSTLE), and 366 to 369 (FWDQ) contribute to the UDP-alpha-D-glucose site.

Belongs to the UDP-glycosyltransferase family.

The protein is UDP-glycosyltransferase 87A2 (UGT87A2) of Arabidopsis thaliana (Mouse-ear cress).